Reading from the N-terminus, the 290-residue chain is Acetyl-coenzyme A carboxylase carboxyl transferase subunit beta (290 aa).

One can recognise a CoA carboxyltransferase N-terminal domain in the interval 27–290 (LWHKCPSCEA…FTHSPSPVSA (264 aa)). Residues Cys31, Cys34, Cys50, and Cys53 each contribute to the Zn(2+) site. The segment at 31 to 53 (CPSCEAVLYRPELEKTLDVCPKC) adopts a C4-type zinc-finger fold.

The protein belongs to the AccD/PCCB family. As to quaternary structure, acetyl-CoA carboxylase is a heterohexamer composed of biotin carboxyl carrier protein (AccB), biotin carboxylase (AccC) and two subunits each of ACCase subunit alpha (AccA) and ACCase subunit beta (AccD). Zn(2+) serves as cofactor.

The protein localises to the cytoplasm. It catalyses the reaction N(6)-carboxybiotinyl-L-lysyl-[protein] + acetyl-CoA = N(6)-biotinyl-L-lysyl-[protein] + malonyl-CoA. It participates in lipid metabolism; malonyl-CoA biosynthesis; malonyl-CoA from acetyl-CoA: step 1/1. Component of the acetyl coenzyme A carboxylase (ACC) complex. Biotin carboxylase (BC) catalyzes the carboxylation of biotin on its carrier protein (BCCP) and then the CO(2) group is transferred by the transcarboxylase to acetyl-CoA to form malonyl-CoA. This Pseudomonas paraeruginosa (strain DSM 24068 / PA7) (Pseudomonas aeruginosa (strain PA7)) protein is Acetyl-coenzyme A carboxylase carboxyl transferase subunit beta.